A 266-amino-acid polypeptide reads, in one-letter code: Putative tyrosine phosphatase 197R (266 aa).

The Tyrosine-protein phosphatase domain occupies 15–167 (RPTLGSLSDK…LFGSQNINND (153 aa)). Residue Cys111 is the Phosphocysteine intermediate of the active site.

This sequence belongs to the protein-tyrosine phosphatase family.

The enzyme catalyses O-phospho-L-tyrosyl-[protein] + H2O = L-tyrosyl-[protein] + phosphate. This Invertebrate iridescent virus 6 (IIV-6) protein is Putative tyrosine phosphatase 197R.